We begin with the raw amino-acid sequence, 126 residues long: NADPH-dependent 7-cyano-7-deazaguanine reductase (126 aa).

Cys40 (thioimide intermediate) is an active-site residue. Asp47 functions as the Proton donor in the catalytic mechanism. Substrate contacts are provided by residues 62–64 (IEL) and 81–82 (HE).

Belongs to the GTP cyclohydrolase I family. QueF type 1 subfamily.

It localises to the cytoplasm. It catalyses the reaction 7-aminomethyl-7-carbaguanine + 2 NADP(+) = 7-cyano-7-deazaguanine + 2 NADPH + 3 H(+). The protein operates within tRNA modification; tRNA-queuosine biosynthesis. Catalyzes the NADPH-dependent reduction of 7-cyano-7-deazaguanine (preQ0) to 7-aminomethyl-7-deazaguanine (preQ1). The polypeptide is NADPH-dependent 7-cyano-7-deazaguanine reductase (Campylobacter jejuni subsp. doylei (strain ATCC BAA-1458 / RM4099 / 269.97)).